The sequence spans 591 residues: Mono(ADP-ribosyl)transferase SpvB (591 aa).

In terms of domain architecture, TR mART core spans 373-576 (PMMGGNSSRP…LRLSDDATAD (204 aa)). Active-site residues include Arg-471, Ser-501, and Glu-538.

It belongs to the SpvB family.

The protein resides in the secreted. The enzyme catalyses L-arginyl-[protein] + NAD(+) = N(omega)-(ADP-D-ribosyl)-L-arginyl-[protein] + nicotinamide + H(+). In terms of biological role, mono-ADP-ribosylates eukaryotic muscle and non-muscle actin on 'Arg-177'. ADP-ribosylation prevents the polymerization of G-actin to F-actin, causing actin filament depolymerization, destruction of the cytoskeleton and cytotoxicity. Does not possess NAD(+)-glycohydrolase activity, unlike most mART enzymes. This Salmonella typhimurium (strain 14028s / SGSC 2262) protein is Mono(ADP-ribosyl)transferase SpvB (spvB).